A 504-amino-acid chain; its full sequence is Putative glycerol-3-phosphate transporter 2 (504 aa).

The next 12 helical transmembrane spans lie at 31–51 (LSFKQYQALVFILTFVAYIAF), 84–104 (ALLGQIDLAFLSVYAVGMFVA), 116–136 (FLTIGMIGTGLFTALFGVAFW), 145–165 (FLAVQVMAGLFQSIGWPCIVA), 178–198 (MIMGVWSAHTSLGNIAGSLIA), 210–230 (FLGPAFLMTFLGIVVYLFLPV), 280–302 (IPGVAPFAFCLFFTKLVSYTFLY), 324–344 (GNLSTIFDVGGVVGGVLAGYI), 352–372 (AITAAGFMYLAIPALFLYRVF), 378–398 (TINVILMFTSGVFIIGPFALI), 424–444 (AIIDGTGSVGAAIGPVLTGYI), and 452–472 (VFYMLMTAALISGLLLTKLII).

Belongs to the major facilitator superfamily. Organophosphate:Pi antiporter (OPA) (TC 2.A.1.4) family. Expressed in the root-hair differentiation zone.

Its subcellular location is the membrane. The sequence is that of Putative glycerol-3-phosphate transporter 2 from Arabidopsis thaliana (Mouse-ear cress).